A 678-amino-acid chain; its full sequence is uncharacterized protein (678 aa).

2 disordered regions span residues 123-156 (TPLSEDRKPTSNNEEEDDADEAKSSNADSSTDSV) and 381-417 (TETTETEGVDKEDSDKASSVQGNEDEVPDTASETEHS).

It localises to the cytoplasm. This is an uncharacterized protein from Schizosaccharomyces pombe (strain 972 / ATCC 24843) (Fission yeast).